Consider the following 340-residue polypeptide: Outer membrane protein U (340 aa).

The signal sequence occupies residues 1–21 (MKKTLIALSVSAAAVATGVNA).

Belongs to the Gram-negative porin family. Homotrimer.

The protein localises to the cell outer membrane. Functionally, forms pores that allow passive diffusion of small molecules across the outer membrane. In Vibrio vulnificus (strain CMCP6), this protein is Outer membrane protein U (ompU).